The primary structure comprises 356 residues: DNA integrity scanning protein DisA (356 aa).

The region spanning 7 to 147 (NKNMLYALKM…EKYVVEDISK (141 aa)) is the DAC domain. Residues Gly74, Leu92, and 105–109 (TRHRT) contribute to the ATP site.

The protein belongs to the DisA family. In terms of assembly, homooctamer. Requires Mg(2+) as cofactor.

The catalysed reaction is 2 ATP = 3',3'-c-di-AMP + 2 diphosphate. In terms of biological role, participates in a DNA-damage check-point that is active prior to asymmetric division when DNA is damaged. DisA forms globular foci that rapidly scan along the chromosomes during sporulation, searching for lesions. When a lesion is present, DisA pauses at the lesion site. This triggers a cellular response that culminates in a temporary block in sporulation initiation. Also has diadenylate cyclase activity, catalyzing the condensation of 2 ATP molecules into cyclic di-AMP (c-di-AMP). c-di-AMP acts as a signaling molecule that couples DNA integrity with progression of sporulation. The rise in c-di-AMP level generated by DisA while scanning the chromosome, operates as a positive signal that advances sporulation; upon encountering a lesion, the DisA focus arrests at the damaged site and halts c-di-AMP synthesis. The polypeptide is DNA integrity scanning protein DisA (Clostridioides difficile (strain 630) (Peptoclostridium difficile)).